Reading from the N-terminus, the 175-residue chain is Small ribosomal subunit protein uS4 (175 aa).

An S4 RNA-binding domain is found at 105–169 (RRLQTIVYRQ…SPLADSLHPA (65 aa)).

It belongs to the universal ribosomal protein uS4 family. In terms of assembly, part of the 30S ribosomal subunit. Contacts protein S5. The interaction surface between S4 and S5 is involved in control of translational fidelity.

One of the primary rRNA binding proteins, it binds directly to 16S rRNA where it nucleates assembly of the body of the 30S subunit. In terms of biological role, with S5 and S12 plays an important role in translational accuracy. The protein is Small ribosomal subunit protein uS4 of Haloquadratum walsbyi (strain DSM 16790 / HBSQ001).